Here is an 87-residue protein sequence, read N- to C-terminus: UPF0250 protein SG0794 (87 aa).

This sequence belongs to the UPF0250 family.

This is UPF0250 protein SG0794 from Sodalis glossinidius (strain morsitans).